The primary structure comprises 70 residues: Beta-defensin 43 (70 aa).

The signal sequence occupies residues 1–22 (MRLLLSILGVLTLLSILPLARS). Intrachain disulfides connect Cys29–Cys57 and Cys36–Cys50.

This sequence belongs to the beta-defensin family.

The protein localises to the secreted. Functionally, has bactericidal activity. The chain is Beta-defensin 43 (Defb43) from Rattus norvegicus (Rat).